Reading from the N-terminus, the 338-residue chain is 1-aminocyclopropane-1-carboxylate deaminase (338 aa).

Lys51 carries the N6-(pyridoxal phosphate)lysine modification. The active-site Nucleophile is the Ser78.

Belongs to the ACC deaminase/D-cysteine desulfhydrase family. As to quaternary structure, homotrimer. The cofactor is pyridoxal 5'-phosphate.

The catalysed reaction is 1-aminocyclopropane-1-carboxylate + H2O = 2-oxobutanoate + NH4(+). Its function is as follows. Catalyzes a cyclopropane ring-opening reaction, the irreversible conversion of 1-aminocyclopropane-1-carboxylate (ACC) to ammonia and alpha-ketobutyrate. Allows growth on ACC as a nitrogen source. The polypeptide is 1-aminocyclopropane-1-carboxylate deaminase (Paraburkholderia xenovorans (strain LB400)).